Reading from the N-terminus, the 2635-residue chain is Large tegument protein deneddylase (2635 aa).

Residues 1–233 are deubiquitination activity; the sequence is MAAQPLYMEG…LHGPRMDISR (233 aa). The 215-residue stretch at 9-223 folds into the Peptidase C76 domain; it reads EGMASTHQAN…NHYRTIVFEE (215 aa). Residues cysteine 29, aspartate 159, and histidine 161 contribute to the active site. 4 disordered regions span residues 243 to 497, 2238 to 2269, 2357 to 2438, and 2500 to 2533; these read ITSP…DRYA, PLTI…QQPK, RTAL…KRAA, and KAGW…DDKS. Over residues 245–255 the composition is skewed to low complexity; that stretch reads SPSVSPAPSEA. 2 stretches are compositionally biased toward basic and acidic residues: residues 256–270 and 282–295; these read PLRR…ETRP and PTDR…DRPP. The tract at residues 316 to 325 is interaction with inner tegument protein; sequence KTGRGGNEGR. Over residues 330-346 the composition is skewed to basic and acidic residues; that stretch reads PPDEHQPPHITAEHMDQ. Residues 448-461 show a composition bias toward low complexity; it reads DDPLTPLYPLTDTP. Low complexity predominate over residues 2379 to 2402; the sequence is TLTFRLPPTAPTPATAALETKTTP. Residues 2425-2437 show a composition bias toward basic and acidic residues; it reads HARDTSPPAEKRA.

This sequence belongs to the herpesviridae large tegument protein family. As to quaternary structure, interacts with host CUL1 and CUL4A; these interactions inhibit the E3 ligase activity of cullins. Interacts with inner tegument protein. Interacts with capsid vertex specific component CVC2. Interacts with the major capsid protein/MCP.

It localises to the virion tegument. It is found in the host cytoplasm. The protein localises to the host nucleus. The enzyme catalyses Thiol-dependent hydrolysis of ester, thioester, amide, peptide and isopeptide bonds formed by the C-terminal Gly of ubiquitin (a 76-residue protein attached to proteins as an intracellular targeting signal).. Large tegument protein that plays multiple roles in the viral cycle. During viral entry, remains associated with the capsid while most of the tegument is detached and participates in the capsid transport toward the host nucleus. Plays a role in the routing of the capsid at the nuclear pore complex and subsequent uncoating. Within the host nucleus, acts as a deneddylase and promotes the degradation of nuclear CRLs (cullin-RING ubiquitin ligases) and thereby stabilizes nuclear CRL substrates, while cytoplasmic CRLs remain unaffected. These modifications prevent host cell cycle S-phase progression and create a favorable environment allowing efficient viral genome replication. Participates later in the secondary envelopment of capsids. Indeed, plays a linker role for the association of the outer viral tegument to the capsids together with the inner tegument protein. In Homo sapiens (Human), this protein is Large tegument protein deneddylase.